The following is a 256-amino-acid chain: MYSIRKQPRNFQRKFNSNTTNRFPIRRKYVGGHTRPSVRRRLTYEPVERPLVHNVLCEKQHGDVFNLQQNTSYTSFVTYPSRGPSGDGRSRDYIKLQSMSVSGVIHAKANCNDDPMEVSHDVNGVFVFSLIMDTKPYLPAGVQALPTFEELFGAYSACYVNLRLLNNQQHRYRVLHSVKRFVSSAGDTKVSQFRFNKRLSTRRYNIWASFHDGDLVNAGGNYRNISKNAILVSYAFVSEHSMSCKPFVQIETSYVG.

The short motif at 18–39 is the Bipartite nuclear localization signal element; that stretch reads NTTNRFPIRRKYVGGHTRPSVR. A Nuclear localization signal motif is present at residues 81–96; the sequence is SRGPSGDGRSRDYIKL. Residues 150–187 form an interaction with Arabidopsis thaliana NSI protein region; that stretch reads ELFGAYSACYVNLRLLNNQQHRYRVLHSVKRFVSSAGD.

Belongs to the begomovirus nuclear shuttle protein family. As to quaternary structure, binds to single-stranded and double-stranded viral DNA. Interacts with the host nuclear shuttle interacting (NSI) protein. This interaction may allow NSP to recruit NSI monomers to the viral genome and thus regulate nuclear export of viral genome by NSP.

Its subcellular location is the host nucleus. It is found in the host cytoplasm. The protein resides in the host cell membrane. Binds to the genomic viral ssDNA, shuttles it into and out of the cell nucleus. Begomoviruses use 2 proteins to transport their DNA from cell to cell. The nuclear shuttle protein (NSP) shuttles it between nucleus and cytoplasm and the movement protein (MP) probably transports the DNA-NSP complex to the cell periphery and facilitates movement across the cell wall. This chain is Nuclear shuttle protein, found in Hewittia sublobata (Coralbush).